A 427-amino-acid chain; its full sequence is Glutamate-1-semialdehyde 2,1-aminomutase (427 aa).

Lysine 265 is subject to N6-(pyridoxal phosphate)lysine.

This sequence belongs to the class-III pyridoxal-phosphate-dependent aminotransferase family. HemL subfamily. Homodimer. Requires pyridoxal 5'-phosphate as cofactor.

Its subcellular location is the cytoplasm. The catalysed reaction is (S)-4-amino-5-oxopentanoate = 5-aminolevulinate. It participates in porphyrin-containing compound metabolism; protoporphyrin-IX biosynthesis; 5-aminolevulinate from L-glutamyl-tRNA(Glu): step 2/2. This is Glutamate-1-semialdehyde 2,1-aminomutase from Edwardsiella ictaluri (strain 93-146).